The primary structure comprises 260 residues: Aliphatic sulfonates import ATP-binding protein SsuB 1 (260 aa).

Positions 29–243 constitute an ABC transporter domain; sequence VRVDGLTRSF…DITDPRFAEL (215 aa). 61-68 is an ATP binding site; that stretch reads GRSGCGKS.

The protein belongs to the ABC transporter superfamily. Aliphatic sulfonates importer (TC 3.A.1.17.2) family. In terms of assembly, the complex is composed of two ATP-binding proteins (SsuB), two transmembrane proteins (SsuC) and a solute-binding protein (SsuA).

The protein localises to the cell membrane. It catalyses the reaction ATP + H2O + aliphatic sulfonate-[sulfonate-binding protein]Side 1 = ADP + phosphate + aliphatic sulfonateSide 2 + [sulfonate-binding protein]Side 1.. In terms of biological role, part of the ABC transporter complex SsuABC involved in aliphatic sulfonates import. Responsible for energy coupling to the transport system. This Streptomyces avermitilis (strain ATCC 31267 / DSM 46492 / JCM 5070 / NBRC 14893 / NCIMB 12804 / NRRL 8165 / MA-4680) protein is Aliphatic sulfonates import ATP-binding protein SsuB 1.